A 95-amino-acid polypeptide reads, in one-letter code: Turripeptide OL184 (95 aa).

Contains 5 disulfide bonds. In terms of tissue distribution, expressed by the venom duct.

It localises to the secreted. Functionally, acts as a neurotoxin by inhibiting an ion channel. The chain is Turripeptide OL184 from Iotyrris olangoensis (Sea snail).